Consider the following 166-residue polypeptide: 6,7-dimethyl-8-ribityllumazine synthase (166 aa).

5-amino-6-(D-ribitylamino)uracil is bound by residues Phe-24, 58-60 (ALE), and 82-84 (AVV). 87–88 (ET) contacts (2S)-2-hydroxy-3-oxobutyl phosphate. His-90 functions as the Proton donor in the catalytic mechanism. Asn-115 provides a ligand contact to 5-amino-6-(D-ribitylamino)uracil. Residue Arg-129 coordinates (2S)-2-hydroxy-3-oxobutyl phosphate.

This sequence belongs to the DMRL synthase family.

It catalyses the reaction (2S)-2-hydroxy-3-oxobutyl phosphate + 5-amino-6-(D-ribitylamino)uracil = 6,7-dimethyl-8-(1-D-ribityl)lumazine + phosphate + 2 H2O + H(+). The protein operates within cofactor biosynthesis; riboflavin biosynthesis; riboflavin from 2-hydroxy-3-oxobutyl phosphate and 5-amino-6-(D-ribitylamino)uracil: step 1/2. In terms of biological role, catalyzes the formation of 6,7-dimethyl-8-ribityllumazine by condensation of 5-amino-6-(D-ribitylamino)uracil with 3,4-dihydroxy-2-butanone 4-phosphate. This is the penultimate step in the biosynthesis of riboflavin. The protein is 6,7-dimethyl-8-ribityllumazine synthase of Cupriavidus necator (strain ATCC 17699 / DSM 428 / KCTC 22496 / NCIMB 10442 / H16 / Stanier 337) (Ralstonia eutropha).